Consider the following 328-residue polypeptide: Stress response kinase A (328 aa).

Asp-201 functions as the Proton acceptor in the catalytic mechanism. Positions 206 and 217 each coordinate Mg(2+). The active site involves Asp-217.

The protein belongs to the SrkA/RdoA protein kinase family. As to quaternary structure, monomer. Requires Mg(2+) as cofactor.

The protein resides in the cytoplasm. The catalysed reaction is L-seryl-[protein] + ATP = O-phospho-L-seryl-[protein] + ADP + H(+). The enzyme catalyses L-threonyl-[protein] + ATP = O-phospho-L-threonyl-[protein] + ADP + H(+). Functionally, a protein kinase that phosphorylates Ser and Thr residues. Probably acts to suppress the effects of stress linked to accumulation of reactive oxygen species. Probably involved in the extracytoplasmic stress response. Also has a role in LPS synthesis, through regulation of the galETK expression. A protein kinase that phosphorylates Ser and Thr residues. Probably acts to suppress the effects of stress linked to accumulation of reactive oxygen species. Probably involved in the extracytoplasmic stress response. In Shigella flexneri, this protein is Stress response kinase A.